We begin with the raw amino-acid sequence, 302 residues long: Oxygen-dependent coproporphyrinogen-III oxidase (302 aa).

Substrate is bound at residue S94. A divalent metal cation contacts are provided by H98 and H108. H108 functions as the Proton donor in the catalytic mechanism. 110–112 (NVR) is a substrate binding site. Residues H147 and H177 each contribute to the a divalent metal cation site. Residues 242–277 (YVEFNLVFDRGTLFGLQSGGRAESILMSMPPVANWR) form an important for dimerization region. 260–262 (GGR) provides a ligand contact to substrate.

The protein belongs to the aerobic coproporphyrinogen-III oxidase family. As to quaternary structure, homodimer. A divalent metal cation serves as cofactor.

The protein resides in the cytoplasm. The enzyme catalyses coproporphyrinogen III + O2 + 2 H(+) = protoporphyrinogen IX + 2 CO2 + 2 H2O. It participates in porphyrin-containing compound metabolism; protoporphyrin-IX biosynthesis; protoporphyrinogen-IX from coproporphyrinogen-III (O2 route): step 1/1. Involved in the heme biosynthesis. Catalyzes the aerobic oxidative decarboxylation of propionate groups of rings A and B of coproporphyrinogen-III to yield the vinyl groups in protoporphyrinogen-IX. This chain is Oxygen-dependent coproporphyrinogen-III oxidase, found in Ralstonia pickettii (strain 12J).